Here is a 397-residue protein sequence, read N- to C-terminus: Keratinocyte differentiation factor 1 (397 aa).

Positions 1–16 (MPRPGQPRPSSGPPRL) are enriched in pro residues. 3 disordered regions span residues 1–67 (MPRP…SAEP), 124–158 (EAAW…MGSS), and 191–214 (PLAD…RGSE). The segment covering 44-55 (RPDPKDPGHHGP) has biased composition (basic and acidic residues). Residues 201–211 (SLPSTFTSSPR) show a composition bias toward polar residues. Position 218 is a phosphoserine (Ser218). Disordered regions lie at residues 304–339 (ISTR…TMVG) and 361–392 (ARKL…GAPL). The segment covering 321 to 330 (ARSTAPAAAP) has biased composition (low complexity). The segment covering 375–388 (SQDSSFQGTDTDSS) has biased composition (polar residues).

It localises to the cytoplasm. It is found in the cell junction. Its function is as follows. Plays a role in the regulation of the epidermis formation during early development. Required both as an inhibitor of basal cell proliferation and a promoter of differentiation of basal progenitor cell progeny. In Rattus norvegicus (Rat), this protein is Keratinocyte differentiation factor 1 (Kdf1).